We begin with the raw amino-acid sequence, 355 residues long: UDP-N-acetylglucosamine--N-acetylmuramyl-(pentapeptide) pyrophosphoryl-undecaprenol N-acetylglucosamine transferase (355 aa).

Residues 12-14 (TGG), Asn-124, Arg-163, Ser-191, Ile-243, 262-267 (ALTVAE), and Gln-288 each bind UDP-N-acetyl-alpha-D-glucosamine.

It belongs to the glycosyltransferase 28 family. MurG subfamily.

The protein resides in the cell inner membrane. It catalyses the reaction di-trans,octa-cis-undecaprenyl diphospho-N-acetyl-alpha-D-muramoyl-L-alanyl-D-glutamyl-meso-2,6-diaminopimeloyl-D-alanyl-D-alanine + UDP-N-acetyl-alpha-D-glucosamine = di-trans,octa-cis-undecaprenyl diphospho-[N-acetyl-alpha-D-glucosaminyl-(1-&gt;4)]-N-acetyl-alpha-D-muramoyl-L-alanyl-D-glutamyl-meso-2,6-diaminopimeloyl-D-alanyl-D-alanine + UDP + H(+). It functions in the pathway cell wall biogenesis; peptidoglycan biosynthesis. Functionally, cell wall formation. Catalyzes the transfer of a GlcNAc subunit on undecaprenyl-pyrophosphoryl-MurNAc-pentapeptide (lipid intermediate I) to form undecaprenyl-pyrophosphoryl-MurNAc-(pentapeptide)GlcNAc (lipid intermediate II). In Tolumonas auensis (strain DSM 9187 / NBRC 110442 / TA 4), this protein is UDP-N-acetylglucosamine--N-acetylmuramyl-(pentapeptide) pyrophosphoryl-undecaprenol N-acetylglucosamine transferase.